Consider the following 157-residue polypeptide: Protein Smg (157 aa).

It belongs to the Smg family.

This is Protein Smg from Enterobacter sp. (strain 638).